The chain runs to 245 residues: 1-(5-phosphoribosyl)-5-[(5-phosphoribosylamino)methylideneamino] imidazole-4-carboxamide isomerase (245 aa).

Aspartate 7 functions as the Proton acceptor in the catalytic mechanism. Catalysis depends on aspartate 129, which acts as the Proton donor.

The protein belongs to the HisA/HisF family.

The protein localises to the cytoplasm. The enzyme catalyses 1-(5-phospho-beta-D-ribosyl)-5-[(5-phospho-beta-D-ribosylamino)methylideneamino]imidazole-4-carboxamide = 5-[(5-phospho-1-deoxy-D-ribulos-1-ylimino)methylamino]-1-(5-phospho-beta-D-ribosyl)imidazole-4-carboxamide. It functions in the pathway amino-acid biosynthesis; L-histidine biosynthesis; L-histidine from 5-phospho-alpha-D-ribose 1-diphosphate: step 4/9. This Escherichia coli (strain SMS-3-5 / SECEC) protein is 1-(5-phosphoribosyl)-5-[(5-phosphoribosylamino)methylideneamino] imidazole-4-carboxamide isomerase.